Reading from the N-terminus, the 85-residue chain is U4-theraphotoxin-Hhn1o (85 aa).

An N-terminal signal peptide occupies residues 1 to 22; it reads MKVTLIAILTCAAVLVLHTTAA. Residues 23–48 constitute a propeptide that is removed on maturation; sequence EELEAESQLMEVGMPDTELAAVDEER. 3 disulfides stabilise this stretch: cysteine 52–cysteine 66, cysteine 56–cysteine 77, and cysteine 71–cysteine 82.

Belongs to the neurotoxin 12 (Hwtx-2) family. 02 (Hwtx-2) subfamily. Expressed by the venom gland.

It is found in the secreted. Its function is as follows. Postsynaptic neurotoxin. This chain is U4-theraphotoxin-Hhn1o, found in Cyriopagopus hainanus (Chinese bird spider).